Here is a 709-residue protein sequence, read N- to C-terminus: Transcriptional factor SWI5 (709 aa).

Phosphoserine is present on Ser-225. Positions 245-264 (LSPMISPPMSNTSFTGSPSR) are enriched in polar residues. The interval 245–267 (LSPMISPPMSNTSFTGSPSRRNN) is disordered. Phosphoserine is present on residues Ser-278 and Ser-300. The residue at position 339 (Thr-339) is a Phosphothreonine. Position 376 is a phosphoserine (Ser-376). Residues 443-483 (LKPPSQQARHREGVFNDLDPNVLTKNTDNEGDDNEENEPES) are disordered. A compositionally biased stretch (acidic residues) spans 471–480 (NEGDDNEENE). A phosphoserine mark is found at Ser-488, Ser-492, and Ser-505. Ser-522 is subject to Phosphoserine; by CDC28. 3 C2H2-type zinc fingers span residues 550-574 (FECL…IQTH), 580-604 (YSCD…KKSH), and 609-632 (YACP…RMIC). The Nuclear localization signal motif lies at 635-659 (GKKYENVVIKRSPRKRGRPRKDGTS). The interval 644-677 (KRSPRKRGRPRKDGTSSVSSSPIKENINKDHNGQ) is disordered. Ser-646 bears the Phosphoserine; by CDC28 mark. The a.T hook DNA-binding region spans 647-659 (PRKRGRPRKDGTS). The residue at position 664 (Ser-664) is a Phosphoserine; by CDC28.

Post-translationally, cell cycle-dependent phosphorylation of three serine residues prevents SWI5 from entering the nucleus, and it accumulates in the cytoplasm. As a consequence of CDC28 kinase inactivation at the end of anaphase, the three serine residues are dephosphorylated and SWI5 enters the nucleus to activate transcription. It is then rapidly degraded. Threonine phosphorylation also seems to occur. In terms of processing, phosphorylated by PHO85.

It localises to the nucleus. The protein localises to the cytoplasm. Its function is as follows. Determines the mother-cell-specific transcription of the HO endonuclease gene that is responsible for the initiation of mating-type switching in yeast. Recognizes a specific sequence in the promoter of the HO gene. Activates EGT2 transcription in a concentration-dependent manner. Synthesized during G2 and early mitosis. This is Transcriptional factor SWI5 (SWI5) from Saccharomyces cerevisiae (strain ATCC 204508 / S288c) (Baker's yeast).